The primary structure comprises 324 residues: IDS-like terpene synthase 3 (324 aa).

Mg(2+) is bound by residues Asp-77 and Asp-81.

This sequence belongs to the FPP/GGPP synthase family. Mg(2+) is required as a cofactor.

It carries out the reaction (2E)-geranyl diphosphate + H2O = linalool + diphosphate. The enzyme catalyses (2E,6E)-farnesyl diphosphate + H2O = (6E)-nerolidol + diphosphate. Terpene synthase that shows monoterpene synthase activity and produces linalool, using geranyl diphosphate (GPP) as substrate. Also shows sesquiterpene synthase activity as it is able to convert farnesyl diphosphate (FPP) into (E)-nerolidol. The protein is IDS-like terpene synthase 3 of Melampsora lini (Rust fungus).